Reading from the N-terminus, the 249-residue chain is General transcription factor IIF subunit 2 (249 aa).

Ala2 is modified (N-acetylalanine). Residues Lys22, Lys33, and Lys137 each carry the N6-acetyllysine modification. The residue at position 142 (Ser142) is a Phosphoserine. DNA contacts are provided by Gly227 and His229. Ser248 bears the Phosphoserine mark.

This sequence belongs to the TFIIF beta subunit family. In terms of assembly, heterodimer of an alpha and a beta subunit. Interacts with HTATSF1 and GPBP1. Interacts with URI1. Interacts with GTF2B (via N-terminus); this interaction is inhibited in presence of GTF2F1. Part of TBP-based Pol II pre-initiation complex (PIC), in which Pol II core assembles with general transcription factors and other specific initiation factors including GTF2E1, GTF2E2, GTF2F1, GTF2F2, TCEA1, ERCC2, ERCC3, GTF2H2, GTF2H3, GTF2H4, GTF2H5, GTF2A1, GTF2A2, GTF2B and TBP; this large multi-subunit PIC complex mediates DNA unwinding and targets Pol II core to the transcription start site where the first phosphodiester bond forms.

Its subcellular location is the nucleus. In terms of biological role, TFIIF is a general transcription initiation factor that binds to RNA polymerase II and helps to recruit it to the initiation complex in collaboration with TFIIB. In Bos taurus (Bovine), this protein is General transcription factor IIF subunit 2 (GTF2F2).